The sequence spans 518 residues: Beta-TrCP (518 aa).

The span at 1–12 shows a compositional bias: polar residues; the sequence is MEGFSCSLQPPT. The interval 1–24 is disordered; the sequence is MEGFSCSLQPPTASEREDCNRDEP. A compositionally biased stretch (basic and acidic residues) spans 14–24; the sequence is SEREDCNRDEP. Residues 119-157 enclose the F-box domain; sequence DHIAENILSYLDAKSLCSAELVCKEWYRVTSDGMLWKKL. 7 WD repeats span residues 230 to 258, 270 to 298, 310 to 338, 353 to 381, 393 to 421, 433 to 461, and 482 to 510; these read ETSK…KIWD, GHTG…RVWD, HHCE…AVWD, GHRA…KVWN, GHKR…RLWD, GHEE…KVWD, and EHSG…LIWD.

Part of a SCF (SKP1-cullin-F-box) ubiquitin-protein ligase complex. Interacts with fbxo5.

In terms of biological role, substrate recognition component of a SCF (SKP1-CUL1-F-box protein) E3 ubiquitin-protein ligase complex which mediates the ubiquitination and subsequent proteasomal degradation of target proteins. Probably recognizes and binds to phosphorylated target proteins. May participate in Wnt signaling. This Xenopus laevis (African clawed frog) protein is Beta-TrCP (fbxw1).